A 151-amino-acid chain; its full sequence is Probable cGMP 3',5'-cyclic phosphodiesterase subunit delta (151 aa).

This sequence belongs to the PDE6D/unc-119 family. As to quaternary structure, interacts with Pde6.

The protein resides in the nucleus. It localises to the cytoplasm. The polypeptide is Probable cGMP 3',5'-cyclic phosphodiesterase subunit delta (Drosophila erecta (Fruit fly)).